The following is a 245-amino-acid chain: 1-(5-phosphoribosyl)-5-[(5-phosphoribosylamino)methylideneamino] imidazole-4-carboxamide isomerase (245 aa).

The active-site Proton acceptor is Asp7. The active-site Proton donor is the Asp129.

It belongs to the HisA/HisF family.

The protein resides in the cytoplasm. It catalyses the reaction 1-(5-phospho-beta-D-ribosyl)-5-[(5-phospho-beta-D-ribosylamino)methylideneamino]imidazole-4-carboxamide = 5-[(5-phospho-1-deoxy-D-ribulos-1-ylimino)methylamino]-1-(5-phospho-beta-D-ribosyl)imidazole-4-carboxamide. Its pathway is amino-acid biosynthesis; L-histidine biosynthesis; L-histidine from 5-phospho-alpha-D-ribose 1-diphosphate: step 4/9. The polypeptide is 1-(5-phosphoribosyl)-5-[(5-phosphoribosylamino)methylideneamino] imidazole-4-carboxamide isomerase (Shewanella baltica (strain OS155 / ATCC BAA-1091)).